We begin with the raw amino-acid sequence, 352 residues long: tRNA pseudouridine synthase D (352 aa).

Asp-81 functions as the Nucleophile in the catalytic mechanism. One can recognise a TRUD domain in the interval 157-303 (GVPNYFGTQR…MDHERRILRL (147 aa)).

This sequence belongs to the pseudouridine synthase TruD family.

The enzyme catalyses uridine(13) in tRNA = pseudouridine(13) in tRNA. Responsible for synthesis of pseudouridine from uracil-13 in transfer RNAs. The sequence is that of tRNA pseudouridine synthase D from Pseudomonas putida (strain GB-1).